Reading from the N-terminus, the 418-residue chain is Tyrosine--tRNA ligase (418 aa).

Position 39 (Y39) interacts with L-tyrosine. The 'HIGH' region motif lies at 44–53 (CTAASLHVGH). Y176 and Q180 together coordinate L-tyrosine. Residues 236–240 (KMGKT) carry the 'KMSKS' region motif. K239 contributes to the ATP binding site. The 69-residue stretch at 350–418 (IGVLVAFAEK…KKKHVLLRLA (69 aa)) folds into the S4 RNA-binding domain.

The protein belongs to the class-I aminoacyl-tRNA synthetase family. TyrS type 1 subfamily. In terms of assembly, homodimer.

Its subcellular location is the cytoplasm. It catalyses the reaction tRNA(Tyr) + L-tyrosine + ATP = L-tyrosyl-tRNA(Tyr) + AMP + diphosphate + H(+). In terms of biological role, catalyzes the attachment of tyrosine to tRNA(Tyr) in a two-step reaction: tyrosine is first activated by ATP to form Tyr-AMP and then transferred to the acceptor end of tRNA(Tyr). This is Tyrosine--tRNA ligase from Rhodopseudomonas palustris (strain ATCC BAA-98 / CGA009).